A 525-amino-acid chain; its full sequence is GMP synthase [glutamine-hydrolyzing] (525 aa).

In terms of domain architecture, Glutamine amidotransferase type-1 spans 9-207; that stretch reads RVLILDFGSQ…VLEIAGCEPL (199 aa). Cys-86 serves as the catalytic Nucleophile. Active-site residues include His-181 and Glu-183. Positions 208–400 constitute a GMPS ATP-PPase domain; the sequence is WTPANIVEDA…LGLPYDMVYR (193 aa). 235 to 241 is an ATP binding site; it reads SGGVDSS.

As to quaternary structure, homodimer.

It catalyses the reaction XMP + L-glutamine + ATP + H2O = GMP + L-glutamate + AMP + diphosphate + 2 H(+). The protein operates within purine metabolism; GMP biosynthesis; GMP from XMP (L-Gln route): step 1/1. Catalyzes the synthesis of GMP from XMP. This Teredinibacter turnerae (strain ATCC 39867 / T7901) protein is GMP synthase [glutamine-hydrolyzing].